The primary structure comprises 759 residues: Phosphoribosylformylglycinamidine synthase subunit PurL (759 aa).

The active site involves His-61. The ATP site is built by Tyr-64 and Lys-105. Glu-107 provides a ligand contact to Mg(2+). Substrate contacts are provided by residues 108-111 (SHNH) and Arg-130. His-109 (proton acceptor) is an active-site residue. Mg(2+) is bound at residue Asp-131. Gln-260 serves as a coordination point for substrate. Asp-288 contributes to the Mg(2+) binding site. Position 332-334 (332-334 (ESQ)) interacts with substrate. ATP contacts are provided by Asp-520 and Gly-557. Position 558 (Asn-558) interacts with Mg(2+). Ser-560 is a binding site for substrate.

The protein belongs to the FGAMS family. As to quaternary structure, monomer. Part of the FGAM synthase complex composed of 1 PurL, 1 PurQ and 2 PurS subunits.

It localises to the cytoplasm. The enzyme catalyses N(2)-formyl-N(1)-(5-phospho-beta-D-ribosyl)glycinamide + L-glutamine + ATP + H2O = 2-formamido-N(1)-(5-O-phospho-beta-D-ribosyl)acetamidine + L-glutamate + ADP + phosphate + H(+). The protein operates within purine metabolism; IMP biosynthesis via de novo pathway; 5-amino-1-(5-phospho-D-ribosyl)imidazole from N(2)-formyl-N(1)-(5-phospho-D-ribosyl)glycinamide: step 1/2. Its function is as follows. Part of the phosphoribosylformylglycinamidine synthase complex involved in the purines biosynthetic pathway. Catalyzes the ATP-dependent conversion of formylglycinamide ribonucleotide (FGAR) and glutamine to yield formylglycinamidine ribonucleotide (FGAM) and glutamate. The FGAM synthase complex is composed of three subunits. PurQ produces an ammonia molecule by converting glutamine to glutamate. PurL transfers the ammonia molecule to FGAR to form FGAM in an ATP-dependent manner. PurS interacts with PurQ and PurL and is thought to assist in the transfer of the ammonia molecule from PurQ to PurL. The chain is Phosphoribosylformylglycinamidine synthase subunit PurL from Thermoplasma acidophilum (strain ATCC 25905 / DSM 1728 / JCM 9062 / NBRC 15155 / AMRC-C165).